A 288-amino-acid chain; its full sequence is Polyamine aminopropyltransferase (288 aa).

Residues 9–238 (ETLHDQFGQY…GIMTFAWATD (230 aa)) form the PABS domain. Glutamine 33 is an S-methyl-5'-thioadenosine binding site. Spermidine is bound by residues histidine 64 and aspartate 88. Residues glutamate 108 and 140–141 (DG) each bind S-methyl-5'-thioadenosine. The active-site Proton acceptor is the aspartate 158. A spermidine-binding site is contributed by 158-161 (DCTD). Position 165 (proline 165) interacts with S-methyl-5'-thioadenosine.

This sequence belongs to the spermidine/spermine synthase family. As to quaternary structure, homodimer or homotetramer.

It is found in the cytoplasm. It catalyses the reaction S-adenosyl 3-(methylsulfanyl)propylamine + putrescine = S-methyl-5'-thioadenosine + spermidine + H(+). It participates in amine and polyamine biosynthesis; spermidine biosynthesis; spermidine from putrescine: step 1/1. Functionally, catalyzes the irreversible transfer of a propylamine group from the amino donor S-adenosylmethioninamine (decarboxy-AdoMet) to putrescine (1,4-diaminobutane) to yield spermidine. The polypeptide is Polyamine aminopropyltransferase (Shigella boydii serotype 4 (strain Sb227)).